The primary structure comprises 936 residues: Protein translocase subunit SecA (936 aa).

Residues Gln90, 108-112, and Asp499 each bind ATP; that span reads GEGKT.

This sequence belongs to the SecA family. As to quaternary structure, monomer and homodimer. Part of the essential Sec protein translocation apparatus which comprises SecA, SecYEG and auxiliary proteins SecDF. Other proteins may also be involved.

The protein localises to the cell inner membrane. It localises to the cellular thylakoid membrane. The protein resides in the cytoplasm. The enzyme catalyses ATP + H2O + cellular proteinSide 1 = ADP + phosphate + cellular proteinSide 2.. Functionally, part of the Sec protein translocase complex. Interacts with the SecYEG preprotein conducting channel. Has a central role in coupling the hydrolysis of ATP to the transfer of proteins into and across the cell membrane, serving as an ATP-driven molecular motor driving the stepwise translocation of polypeptide chains across the membrane. Probably participates in protein translocation into and across both the cytoplasmic and thylakoid membranes in cyanobacterial cells. This is Protein translocase subunit SecA from Trichodesmium erythraeum (strain IMS101).